A 152-amino-acid chain; its full sequence is Putative pre-16S rRNA nuclease (152 aa).

This sequence belongs to the YqgF nuclease family.

The protein localises to the cytoplasm. Could be a nuclease involved in processing of the 5'-end of pre-16S rRNA. This chain is Putative pre-16S rRNA nuclease, found in Bifidobacterium longum (strain DJO10A).